A 715-amino-acid polypeptide reads, in one-letter code: Probable ubiquitin thioesterase DG1039 (715 aa).

Positions K86–N302 form a coiled coil. Over residues N287–N302 the composition is skewed to basic and acidic residues. 3 disordered regions span residues N287–T367, Q398–Y450, and L502–A527. The segment covering T339–Q349 has biased composition (polar residues). Low complexity predominate over residues Q398–Q409. Composition is skewed to polar residues over residues S410–N427 and L502–S525. The region spanning I537–L666 is the MPN domain. Zn(2+) contacts are provided by H615, H617, D628, H630, C672, H678, and H680. Positions H615–D628 match the JAMM motif motif.

It belongs to the peptidase M67C family. Requires Zn(2+) as cofactor.

Functionally, may be a zinc metalloprotease that specifically cleaves ubiquitin chains. The sequence is that of Probable ubiquitin thioesterase DG1039 (DG1039) from Dictyostelium discoideum (Social amoeba).